A 195-amino-acid chain; its full sequence is MKRFARKETIYLRGEEARTLYRLEEGLVRVVELLPDGRLITLRHVLPGDYFGEEALEGKAYRYTAEAMTEAVVQGLEPRAMDHEALHRVARNLARQMRRVQAYEAHLQTGELRARIARYLLFLADTPLSARDRQGIYVTVSHEEIADATASIRESVSKVLADLRREGLIATAYRRVYLLDLAALEREAGSALEAA.

In terms of domain architecture, HTH crp-type spans 110-182; that stretch reads GELRARIARY…YRRVYLLDLA (73 aa). Positions 142–161 form a DNA-binding region, H-T-H motif; sequence HEEIADATASIRESVSKVLA.

As to quaternary structure, homodimer.

Its function is as follows. Activates transcription. Positively regulates PcrtB promoter upstream of the crtB operon in a cAMP-independent manner. Regulated genes include genes encoding DNA photolyase, phytoene synthase and cytochrome P450 monooxygenase, which are involved in carotenoid biosynthesis. Positively regulates the light-inducible gene cluster in the megaplasmid in a cAMP-independent manner. This Thermus thermophilus (strain ATCC 27634 / DSM 579 / HB8) protein is Transcriptional regulator LdrP.